Consider the following 396-residue polypeptide: UPF0046 protein T07D4.2 (396 aa).

Residues 73 to 94 (SRRGSIASGIPMDKKTRRKLSN) form a disordered region.

Belongs to the UPF0046 family.

The polypeptide is UPF0046 protein T07D4.2 (Caenorhabditis elegans).